We begin with the raw amino-acid sequence, 81 residues long: Translational regulator CsrA (81 aa).

This sequence belongs to the CsrA/RsmA family. Homodimer; the beta-strands of each monomer intercalate to form a hydrophobic core, while the alpha-helices form wings that extend away from the core.

It is found in the cytoplasm. In terms of biological role, a translational regulator that binds mRNA to regulate translation initiation and/or mRNA stability. Usually binds in the 5'-UTR at or near the Shine-Dalgarno sequence preventing ribosome-binding, thus repressing translation. Its main target seems to be the major flagellin gene, while its function is anatagonized by FliW. The protein is Translational regulator CsrA of Desulforapulum autotrophicum (strain ATCC 43914 / DSM 3382 / VKM B-1955 / HRM2) (Desulfobacterium autotrophicum).